The following is a 314-amino-acid chain: Inactive chitinase-like protein 1 (314 aa).

The N-terminal stretch at 1–19 (MKEIVRALEGYGPPKDKAA) is a signal peptide. The Chitin-binding type-1 domain occupies 20–60 (EQCGWQAGGALCPGGLCCSQYGWCANTPEYCGSGCQSQCDG). Disulfide bonds link C22–C37, C31–C43, C36–C50, C54–C58, C92–C154, C166–C174, and C273–C305.

This sequence belongs to the glycosyl hydrolase 19 family. Chitinase class I subfamily.

In terms of biological role, inactive chitinase-like protein that does not exhibit hydrolytic activity toward chitin. Binds strongly to chitin and possesses antifungal activity toward the fungal pathogen Altenaria alternata in plate assays. Inhibits the growth of Fusarium oxysporum on plate assays. Probably involved in defense against fungal pathogens through a mechanism that only involves carbohydrate binding. This is Inactive chitinase-like protein 1 from Hevea brasiliensis (Para rubber tree).